The following is an 800-amino-acid chain: Nucleolar RNA helicase 2-B (800 aa).

Positions 1–14 are enriched in basic and acidic residues; that stretch reads MPGKVYTDEMEGKS. Residues 1-200 are disordered; sequence MPGKVYTDEM…TDTSEITAAN (200 aa). The segment covering 114–124 has biased composition (polar residues); sequence ETNISLSSQGG. Positions 221–249 match the Q motif motif; that stretch reads GDFSKFPISKDTIKNLQAKGVTYLFPIQS. The Helicase ATP-binding domain maps to 252–431; the sequence is FHTVYSGKDV…KKYMRKQYEK (180 aa). ATP is bound at residue 265–272; it reads ARTGTGKT. Positions 374-377 match the DEAD box motif; sequence DEVD. A Helicase C-terminal domain is found at 464–620; it reads DIVQVYSGSH…SSADAIKSLD (157 aa). Residues 750-800 form a disordered region; sequence IQESERSFDGPRNRSFGGRGRRPFDRRNNSRNSSGGGGGRRGRSGGFRRGR. The span at 752–761 shows a compositional bias: basic and acidic residues; that stretch reads ESERSFDGPR. The span at 789–800 shows a compositional bias: basic residues; sequence RRGRSGGFRRGR.

It belongs to the DEAD box helicase family. DDX21/DDX50 subfamily. As to expression, widely expressed. Expressed at higher level in stomach. Expressed at lower level compared to ddx21-a.

Its subcellular location is the nucleus. It localises to the nucleolus. It is found in the nucleoplasm. The protein localises to the cytoplasm. The protein resides in the cytosol. Its subcellular location is the mitochondrion. The enzyme catalyses ATP + H2O = ADP + phosphate + H(+). In terms of biological role, RNA helicase that acts as a sensor of the transcriptional status of both RNA polymerase (Pol) I and II: promotes ribosomal RNA (rRNA) processing and transcription from polymerase II (Pol II). Binds various RNAs, such as rRNAs, snoRNAs, 7SK and, at lower extent, mRNAs. In the nucleolus, localizes to rDNA locus, where it directly binds rRNAs and snoRNAs, and promotes rRNA transcription, processing and modification. Required for rRNA 2'-O-methylation, possibly by promoting the recruitment of late-acting snoRNAs SNORD56 and SNORD58 with pre-ribosomal complexes. In the nucleoplasm, binds 7SK RNA and is recruited to the promoters of Pol II-transcribed genes: acts by facilitating the release of P-TEFb from inhibitory 7SK snRNP in a manner that is dependent on its helicase activity, thereby promoting transcription of its target genes. Required to prevent R-loop-associated DNA damage and transcription-associated genomic instability. This is Nucleolar RNA helicase 2-B (ddx21-b) from Xenopus laevis (African clawed frog).